The primary structure comprises 265 residues: Hydroxyethylthiazole kinase (265 aa).

M43 contacts substrate. 2 residues coordinate ATP: R119 and S165. Position 192 (A192) interacts with substrate.

It belongs to the Thz kinase family. It depends on Mg(2+) as a cofactor.

It carries out the reaction 5-(2-hydroxyethyl)-4-methylthiazole + ATP = 4-methyl-5-(2-phosphooxyethyl)-thiazole + ADP + H(+). The protein operates within cofactor biosynthesis; thiamine diphosphate biosynthesis; 4-methyl-5-(2-phosphoethyl)-thiazole from 5-(2-hydroxyethyl)-4-methylthiazole: step 1/1. Catalyzes the phosphorylation of the hydroxyl group of 4-methyl-5-beta-hydroxyethylthiazole (THZ). The polypeptide is Hydroxyethylthiazole kinase (Haemophilus influenzae (strain 86-028NP)).